A 264-amino-acid polypeptide reads, in one-letter code: Thymidylate synthase (264 aa).

Arginine 21 contributes to the dUMP binding site. Histidine 51 lines the (6R)-5,10-methylene-5,6,7,8-tetrahydrofolate pocket. DUMP is bound at residue 126–127; sequence RR. Cysteine 146 functions as the Nucleophile in the catalytic mechanism. DUMP is bound by residues 166-169, asparagine 177, and 207-209; these read RSAD and HLY. Aspartate 169 contacts (6R)-5,10-methylene-5,6,7,8-tetrahydrofolate. Serine 263 contacts (6R)-5,10-methylene-5,6,7,8-tetrahydrofolate.

This sequence belongs to the thymidylate synthase family. Bacterial-type ThyA subfamily. Homodimer.

It localises to the cytoplasm. The catalysed reaction is dUMP + (6R)-5,10-methylene-5,6,7,8-tetrahydrofolate = 7,8-dihydrofolate + dTMP. It functions in the pathway pyrimidine metabolism; dTTP biosynthesis. In terms of biological role, catalyzes the reductive methylation of 2'-deoxyuridine-5'-monophosphate (dUMP) to 2'-deoxythymidine-5'-monophosphate (dTMP) while utilizing 5,10-methylenetetrahydrofolate (mTHF) as the methyl donor and reductant in the reaction, yielding dihydrofolate (DHF) as a by-product. This enzymatic reaction provides an intracellular de novo source of dTMP, an essential precursor for DNA biosynthesis. The polypeptide is Thymidylate synthase (Nitrosococcus oceani (strain ATCC 19707 / BCRC 17464 / JCM 30415 / NCIMB 11848 / C-107)).